A 274-amino-acid polypeptide reads, in one-letter code: NH(3)-dependent NAD(+) synthetase (274 aa).

Gly-46 to Ser-53 is a binding site for ATP. Residue Asp-52 coordinates Mg(2+). Arg-140 lines the deamido-NAD(+) pocket. ATP is bound at residue Thr-160. Glu-165 lines the Mg(2+) pocket. 2 residues coordinate deamido-NAD(+): Lys-173 and Asp-180. Positions 189 and 211 each coordinate ATP. Deamido-NAD(+) is bound at residue His-260 to Lys-261.

This sequence belongs to the NAD synthetase family. Homodimer.

The catalysed reaction is deamido-NAD(+) + NH4(+) + ATP = AMP + diphosphate + NAD(+) + H(+). It participates in cofactor biosynthesis; NAD(+) biosynthesis; NAD(+) from deamido-NAD(+) (ammonia route): step 1/1. In terms of biological role, catalyzes the ATP-dependent amidation of deamido-NAD to form NAD. Uses ammonia as a nitrogen source. The chain is NH(3)-dependent NAD(+) synthetase from Listeria innocua serovar 6a (strain ATCC BAA-680 / CLIP 11262).